We begin with the raw amino-acid sequence, 1064 residues long: Carbamoyl phosphate synthase large chain (1064 aa).

The interval 1 to 401 (MPKRADIKKI…ALMKAIRSLE (401 aa)) is carboxyphosphate synthetic domain. ATP contacts are provided by arginine 129, arginine 169, glycine 175, glycine 176, lysine 208, isoleucine 210, glutamate 215, glycine 241, isoleucine 242, histidine 243, glutamine 284, and glutamate 298. Positions 133-327 (KQLMEALKEP…IAKMAAKIAI (195 aa)) constitute an ATP-grasp 1 domain. Residues glutamine 284, glutamate 298, and asparagine 300 each contribute to the Mg(2+) site. Mn(2+)-binding residues include glutamine 284, glutamate 298, and asparagine 300. Residues 402-546 (IGTFALDDLT…YSTYELENES (145 aa)) are oligomerization domain. The carbamoyl phosphate synthetic domain stretch occupies residues 547–929 (LKEKRPSVLV…ALYKAFVAAG (383 aa)). In terms of domain architecture, ATP-grasp 2 spans 671-861 (NQVIKKLDLS…LAQLATRVML (191 aa)). Residues arginine 707, serine 746, leucine 748, glutamate 752, glycine 777, valine 778, histidine 779, serine 780, glutamine 820, and glutamate 832 each contribute to the ATP site. Mg(2+) is bound by residues glutamine 820, glutamate 832, and asparagine 834. Positions 820, 832, and 834 each coordinate Mn(2+). The MGS-like domain occupies 930–1064 (FKVHEHGNVL…VSAINKGDKS (135 aa)). The tract at residues 930–1064 (FKVHEHGNVL…VSAINKGDKS (135 aa)) is allosteric domain.

Belongs to the CarB family. In terms of assembly, composed of two chains; the small (or glutamine) chain promotes the hydrolysis of glutamine to ammonia, which is used by the large (or ammonia) chain to synthesize carbamoyl phosphate. Tetramer of heterodimers (alpha,beta)4. Mg(2+) is required as a cofactor. It depends on Mn(2+) as a cofactor.

It catalyses the reaction hydrogencarbonate + L-glutamine + 2 ATP + H2O = carbamoyl phosphate + L-glutamate + 2 ADP + phosphate + 2 H(+). The enzyme catalyses hydrogencarbonate + NH4(+) + 2 ATP = carbamoyl phosphate + 2 ADP + phosphate + 2 H(+). It functions in the pathway amino-acid biosynthesis; L-arginine biosynthesis; carbamoyl phosphate from bicarbonate: step 1/1. It participates in pyrimidine metabolism; UMP biosynthesis via de novo pathway; (S)-dihydroorotate from bicarbonate: step 1/3. In terms of biological role, large subunit of the glutamine-dependent carbamoyl phosphate synthetase (CPSase). CPSase catalyzes the formation of carbamoyl phosphate from the ammonia moiety of glutamine, carbonate, and phosphate donated by ATP, constituting the first step of 2 biosynthetic pathways, one leading to arginine and/or urea and the other to pyrimidine nucleotides. The large subunit (synthetase) binds the substrates ammonia (free or transferred from glutamine from the small subunit), hydrogencarbonate and ATP and carries out an ATP-coupled ligase reaction, activating hydrogencarbonate by forming carboxy phosphate which reacts with ammonia to form carbamoyl phosphate. The sequence is that of Carbamoyl phosphate synthase large chain from Oenococcus oeni (strain ATCC BAA-331 / PSU-1).